Reading from the N-terminus, the 300-residue chain is Polyamine aminopropyltransferase (300 aa).

One can recognise a PABS domain in the interval 4–237 (WHWHIEWQTP…GLWGFVYASD (234 aa)). Position 33 (glutamine 33) interacts with S-methyl-5'-thioadenosine. Spermidine contacts are provided by histidine 64 and glutamate 88. S-methyl-5'-thioadenosine contacts are provided by residues aspartate 108 and 140–141 (DG). Aspartate 158 serves as the catalytic Proton acceptor. Proline 167 is an S-methyl-5'-thioadenosine binding site.

This sequence belongs to the spermidine/spermine synthase family. Homodimer or homotetramer.

Its subcellular location is the cytoplasm. The enzyme catalyses S-adenosyl 3-(methylsulfanyl)propylamine + putrescine = S-methyl-5'-thioadenosine + spermidine + H(+). It functions in the pathway amine and polyamine biosynthesis; spermidine biosynthesis; spermidine from putrescine: step 1/1. Catalyzes the irreversible transfer of a propylamine group from the amino donor S-adenosylmethioninamine (decarboxy-AdoMet) to putrescine (1,4-diaminobutane) to yield spermidine. This is Polyamine aminopropyltransferase from Sulfurisphaera tokodaii (strain DSM 16993 / JCM 10545 / NBRC 100140 / 7) (Sulfolobus tokodaii).